We begin with the raw amino-acid sequence, 279 residues long: Bifunctional protein FolD (279 aa).

Residues 166–168 (GRS) and S191 each bind NADP(+).

It belongs to the tetrahydrofolate dehydrogenase/cyclohydrolase family. Homodimer.

The enzyme catalyses (6R)-5,10-methylene-5,6,7,8-tetrahydrofolate + NADP(+) = (6R)-5,10-methenyltetrahydrofolate + NADPH. It carries out the reaction (6R)-5,10-methenyltetrahydrofolate + H2O = (6R)-10-formyltetrahydrofolate + H(+). The protein operates within one-carbon metabolism; tetrahydrofolate interconversion. Functionally, catalyzes the oxidation of 5,10-methylenetetrahydrofolate to 5,10-methenyltetrahydrofolate and then the hydrolysis of 5,10-methenyltetrahydrofolate to 10-formyltetrahydrofolate. This chain is Bifunctional protein FolD, found in Shouchella clausii (strain KSM-K16) (Alkalihalobacillus clausii).